A 203-amino-acid polypeptide reads, in one-letter code: Outer-membrane lipoprotein LolB (203 aa).

Residues 1–18 (MYRLLCLLALLTAAGLMG) form the signal peptide. Cysteine 19 is lipidated: N-palmitoyl cysteine. Cysteine 19 carries S-diacylglycerol cysteine lipidation.

This sequence belongs to the LolB family. Monomer.

The protein resides in the cell outer membrane. Plays a critical role in the incorporation of lipoproteins in the outer membrane after they are released by the LolA protein. This chain is Outer-membrane lipoprotein LolB, found in Cellvibrio japonicus (strain Ueda107) (Pseudomonas fluorescens subsp. cellulosa).